The following is a 232-amino-acid chain: RNA chaperone ProQ (232 aa).

Positions 105–182 are disordered; it reads EAKARVQAQR…REEQHTPVSD (78 aa). Positions 117–136 are enriched in basic and acidic residues; it reads QQAKKREAAAAAGEKEDAPR. Residues 137–146 are compositionally biased toward basic residues; it reads RERKPRPTTP. Residues 147–177 show a composition bias toward basic and acidic residues; sequence RRKEGAERKPRAQKPVEKAPKTVKAPREEQH.

The protein belongs to the ProQ family.

The protein localises to the cytoplasm. In terms of biological role, RNA chaperone with significant RNA binding, RNA strand exchange and RNA duplexing activities. May regulate ProP activity through an RNA-based, post-transcriptional mechanism. This Escherichia coli (strain ATCC 8739 / DSM 1576 / NBRC 3972 / NCIMB 8545 / WDCM 00012 / Crooks) protein is RNA chaperone ProQ.